Consider the following 315-residue polypeptide: Methionyl-tRNA formyltransferase (315 aa).

(6S)-5,6,7,8-tetrahydrofolate is bound at residue 113–116 (SLLP).

This sequence belongs to the Fmt family.

It carries out the reaction L-methionyl-tRNA(fMet) + (6R)-10-formyltetrahydrofolate = N-formyl-L-methionyl-tRNA(fMet) + (6S)-5,6,7,8-tetrahydrofolate + H(+). Functionally, attaches a formyl group to the free amino group of methionyl-tRNA(fMet). The formyl group appears to play a dual role in the initiator identity of N-formylmethionyl-tRNA by promoting its recognition by IF2 and preventing the misappropriation of this tRNA by the elongation apparatus. The protein is Methionyl-tRNA formyltransferase of Shigella sonnei (strain Ss046).